Here is a 533-residue protein sequence, read N- to C-terminus: Nuclear receptor corepressor 1 (533 aa).

Over residues 1–17 (KDKGPPPKSRYEEELRT) the composition is skewed to basic and acidic residues. The interval 1–21 (KDKGPPPKSRYEEELRTRGKT) is disordered. A CORNR box 1 motif is present at residues 29–33 (IDVII). The interval 37–144 (IASDKDARER…EGMGQVPRTH (108 aa)) is disordered. The segment covering 38-47 (ASDKDARERG) has biased composition (basic and acidic residues). Low complexity predominate over residues 48–59 (SQSSDSSSSLSS). Phosphoserine occurs at positions 73 and 77. The ID1 stretch occupies residues 130 to 209 (PSSQAEGMGQ…QSQTVLHPRP (80 aa)). Residues 145–148 (RLIT) form a required for interaction with RARA in the absence of its ligand region. Residues 153 to 157 (ICQII) carry the CORNR box 2 motif. The span at 165–180 (QVPSQPSTSTFQTSPS) shows a compositional bias: low complexity. Residues 165–254 (QVPSQPSTST…SPPQGPAVHE (90 aa)) form a disordered region. Positions 181 to 204 (ALSSTPVRTKPSSRYSPESQSQTV) are enriched in polar residues. A phosphoserine mark is found at serine 196, serine 214, serine 230, serine 245, and serine 278. Positions 218 to 236 (LVDKSRGSRPGKSPERSHI) are enriched in basic and acidic residues. The ID2 stretch occupies residues 306–367 (IFRKLNSSGG…EDIIRKALMG (62 aa)). The CORNR box 3 signature appears at 357–361 (LEDII). Residues 382 to 399 (HPVGVVPGSASTSVVTSS) are compositionally biased toward low complexity. Residues 382–476 (HPVGVVPGSA…RPSSTGSTQF (95 aa)) form a disordered region. Threonine 492 is subject to Phosphothreonine. Phosphoserine is present on residues serine 529 and serine 531.

This sequence belongs to the N-CoR nuclear receptor corepressors family. Forms a large corepressor complex that contains SIN3A/B and histone deacetylases HDAC1 and HDAC2. This complex associates with the thyroid receptor (TR) and the retinoid acid receptor (RAR) in the absence of ligand. Interacts directly with RARA; the interaction is facilitated with RARA trimethylation. Component of the N-Cor repressor complex, at least composed of CBFA2T3, HEXIM1, NCOR1, NCOR2, HDAC3, TBL1X, TBL1XR1, CORO2A and GPS2. Interacts with ZBTB33; the interaction serves to recruit the N-CoR complex to promoter regions containing methylated CpG dinucleotides. Interacts with TRIM28 and KDM3A. Interacts (via the RD1 domain) with BAZ1A (via its N-terminal); the interaction corepresses a number of NCOR1-regulated genes. Interacts with BCL6, C1D, DACH1, HEXIM1, HDAC7, RORA, RORC, SAP30, SIAH2, SIN3A and SIN3B. May interact with DEAF1. Interacts with RXRA. Interacts with SETD5. Interacts with VDR. Interacts with ZBTB7A. Interacts with AR. Interacts with HDAC3. Post-translationally, ubiquitinated; mediated by SIAH2 and leading to its subsequent proteasomal degradation.

Its subcellular location is the nucleus. Mediates transcriptional repression by certain nuclear receptors. Part of a complex which promotes histone deacetylation and the formation of repressive chromatin structures which may impede the access of basal transcription factors. Participates in the transcriptional repressor activity produced by BCL6. Recruited by ZBTB7A to the androgen response elements/ARE on target genes, negatively regulates androgen receptor signaling and androgen-induced cell proliferation. Mediates the NR1D1-dependent repression and circadian regulation of TSHB expression. The NCOR1-HDAC3 complex regulates the circadian expression of the core clock gene ARTNL/BMAL1 and the genes involved in lipid metabolism in the liver. The sequence is that of Nuclear receptor corepressor 1 (Ncor1) from Rattus norvegicus (Rat).